Consider the following 524-residue polypeptide: Nucleobase-ascorbate transporter 2 (524 aa).

A run of 12 helical transmembrane segments spans residues 41-61 (YILA…MMGG), 69-89 (VVQT…LFGT), 91-111 (LPTV…IIHD), 133-153 (GAII…MWAI), 155-175 (SRFF…FGLF), 179-199 (FPVV…FVIF), 217-237 (FALI…TASG), 282-302 (AFAM…AFKA), 359-379 (RVIQ…KFGA), 380-400 (LFAS…FGLV), 419-439 (LFIV…FRDF), and 457-477 (DFLN…AVFL).

The protein belongs to the nucleobase:cation symporter-2 (NCS2) (TC 2.A.40) family. As to expression, expressed in cotyledons 10 days after imbibition (DAI). Expressed in the minor and major veins of cotyledons and leaves, in the shoot apex and pedicels. Expressed in the root meristems, root tips and lateral root primordia.

The protein resides in the membrane. The sequence is that of Nucleobase-ascorbate transporter 2 (NAT2) from Arabidopsis thaliana (Mouse-ear cress).